The chain runs to 433 residues: Phosphoribosylamine--glycine ligase (433 aa).

The 208-residue stretch at Arg110–Lys317 folds into the ATP-grasp domain. Position 137 to 194 (Ile137 to Thr194) interacts with ATP. 3 residues coordinate Mg(2+): Gln275, Glu287, and Asn289. Gln275, Glu287, and Asn289 together coordinate Mn(2+).

It belongs to the GARS family. It depends on Mg(2+) as a cofactor. Mn(2+) serves as cofactor.

It catalyses the reaction 5-phospho-beta-D-ribosylamine + glycine + ATP = N(1)-(5-phospho-beta-D-ribosyl)glycinamide + ADP + phosphate + H(+). It participates in purine metabolism; IMP biosynthesis via de novo pathway; N(1)-(5-phospho-D-ribosyl)glycinamide from 5-phospho-alpha-D-ribose 1-diphosphate: step 2/2. This is Phosphoribosylamine--glycine ligase from Methanosarcina barkeri (strain Fusaro / DSM 804).